The chain runs to 178 residues: Small ribosomal subunit protein bS16 (178 aa).

The disordered stretch occupies residues 78 to 178 (KLGITQWTAG…AAPAEGEEQA (101 aa)). Positions 91-113 (KKGEPGQKAKERAEERAQREADR) are enriched in basic and acidic residues. Over residues 114–127 (AAAAAEAAAAPAEE) the composition is skewed to low complexity. Residues 128 to 139 (APAEEAPAEEAA) are compositionally biased toward acidic residues. The span at 140–172 (AEAAPEAAAAEEAPAAEAAAEEAAPAAEEAAPA) shows a compositional bias: low complexity.

Belongs to the bacterial ribosomal protein bS16 family.

The sequence is that of Small ribosomal subunit protein bS16 from Phenylobacterium zucineum (strain HLK1).